Here is a 907-residue protein sequence, read N- to C-terminus: Gamma-tubulin complex component 3 (907 aa).

Residue A2 is modified to N-acetylalanine. S113 is modified (phosphoserine). Positions 210-230 (NQPSSQATTSKGVPSAVSRNM) are enriched in polar residues. The disordered stretch occupies residues 210–241 (NQPSSQATTSKGVPSAVSRNMTRSRREGDTGG).

The protein belongs to the TUBGCP family. In terms of assembly, component of the gamma-tubulin ring complex (gTuRC) consisting of TUBGCP2, TUBGCP3, TUBGCP4, TUBGCP5 and TUBGCP6 and gamma-tubulin TUBG1 or TUBG2. TUBGCP2, TUBGCP3, TUBGCP4, TUBGCP5 and TUBGCP6 assemble in a 5:5:2:1:1 stoichiometry; each is associated with a gamma-tubulin, thereby arranging 14 gamma-tubulins in a helical manner. Gamma-tubulin at the first position is blocked by TUBGCP3 at the last position, allowing 13 protafilaments to grow into a microtubule. The gTuRC (via TUBGCP3 and TUBGCP6) interacts with ACTB and MZT1; the interactions form a luminal bridge that stabilizes the initial structure during complex assembly. The gTuRC (via TUBGCP2) interacts with MZT2A/MZT2B and CDK5RAP2 (via CM1 motif); the interactions play a role in gTuRC activation. Interacts with NIN (via N-terminus); the interaction may promote recruitment of the gamma-tubulin ring complex to the centrosome. Ubiquitously expressed.

Its subcellular location is the cytoplasm. The protein localises to the cytoskeleton. It localises to the microtubule organizing center. The protein resides in the centrosome. Component of the gamma-tubulin ring complex (gTuRC) which mediates microtubule nucleation. The gTuRC regulates the minus-end nucleation of alpha-beta tubulin heterodimers that grow into microtubule protafilaments, a critical step in centrosome duplication and spindle formation. The protein is Gamma-tubulin complex component 3 (TUBGCP3) of Homo sapiens (Human).